The chain runs to 240 residues: Eukaryotic translation initiation factor 3 subunit K (240 aa).

In terms of domain architecture, PCI spans 41 to 221 (YDKDIVLTIL…TIKTRNIDEK (181 aa)).

This sequence belongs to the eIF-3 subunit K family. As to quaternary structure, component of the eukaryotic translation initiation factor 3 (eIF-3) complex.

It is found in the cytoplasm. Its function is as follows. Component of the eukaryotic translation initiation factor 3 (eIF-3) complex, which is involved in protein synthesis of a specialized repertoire of mRNAs and, together with other initiation factors, stimulates binding of mRNA and methionyl-tRNAi to the 40S ribosome. The eIF-3 complex specifically targets and initiates translation of a subset of mRNAs involved in cell proliferation. In Caenorhabditis elegans, this protein is Eukaryotic translation initiation factor 3 subunit K.